Reading from the N-terminus, the 84-residue chain is UPF0153 protein YeiW (84 aa).

It belongs to the UPF0153 family.

The chain is UPF0153 protein YeiW (yeiW) from Escherichia coli (strain K12).